We begin with the raw amino-acid sequence, 361 residues long: Alternative oxidase, mitochondrial (361 aa).

Residues 155–175 traverse the membrane as a helical segment; the sequence is LIRYVFLESVAGVPGMVAGML. Residues Glu-162, Glu-201, and His-204 each contribute to the Fe cation site. The helical transmembrane segment at 221-241 threads the bilayer; the sequence is MILGAQGVFFNSFFLCYLFSP. Fe cation contacts are provided by Glu-252, Glu-253, Glu-309, and His-312. The disordered stretch occupies residues 320–361; sequence GNLKQDEDPNPFVSEYGKERGEKPGKGIESLKPVGWERDEVI. Residues 335 to 345 show a composition bias toward basic and acidic residues; sequence YGKERGEKPGK.

This sequence belongs to the alternative oxidase family. The cofactor is Fe cation.

It localises to the mitochondrion inner membrane. Catalyzes cyanide-resistant oxygen consumption. May increase respiration when the cytochrome respiratory pathway is restricted, or in response to low temperatures. This is Alternative oxidase, mitochondrial (aox) from Botryotinia fuckeliana (Noble rot fungus).